A 186-amino-acid chain; its full sequence is Adenine phosphoribosyltransferase (186 aa).

This sequence belongs to the purine/pyrimidine phosphoribosyltransferase family. As to quaternary structure, homodimer.

The protein localises to the cytoplasm. The enzyme catalyses AMP + diphosphate = 5-phospho-alpha-D-ribose 1-diphosphate + adenine. The protein operates within purine metabolism; AMP biosynthesis via salvage pathway; AMP from adenine: step 1/1. Catalyzes a salvage reaction resulting in the formation of AMP, that is energically less costly than de novo synthesis. The chain is Adenine phosphoribosyltransferase from Xanthomonas oryzae pv. oryzae (strain PXO99A).